The sequence spans 479 residues: Endoglucanase 20 (479 aa).

Positions 1–21 are cleaved as a signal peptide; that stretch reads MGKLLVLMLVGMFLAFESLEA. N-linked (GlcNAc...) asparagine glycosylation is present at N29. D76 functions as the Nucleophile in the catalytic mechanism. Residue H398 is part of the active site. A glycan (N-linked (GlcNAc...) asparagine) is linked at N442. Catalysis depends on residues D449 and E458.

This sequence belongs to the glycosyl hydrolase 9 (cellulase E) family.

It is found in the secreted. The enzyme catalyses Endohydrolysis of (1-&gt;4)-beta-D-glucosidic linkages in cellulose, lichenin and cereal beta-D-glucans.. This chain is Endoglucanase 20, found in Arabidopsis thaliana (Mouse-ear cress).